The primary structure comprises 199 residues: Probable GTP-binding protein EngB (199 aa).

The EngB-type G domain maps to 22–196 (NFSEVAFLGR…EDVIINQTLG (175 aa)). GTP contacts are provided by residues 30–37 (GRSNVGKS), 57–61 (GKTQL), 82–85 (DLPG), 152–155 (TKCD), and 175–177 (VSN). Mg(2+) contacts are provided by Ser37 and Thr59.

This sequence belongs to the TRAFAC class TrmE-Era-EngA-EngB-Septin-like GTPase superfamily. EngB GTPase family. It depends on Mg(2+) as a cofactor.

Its function is as follows. Necessary for normal cell division and for the maintenance of normal septation. This chain is Probable GTP-binding protein EngB, found in Campylobacter jejuni subsp. doylei (strain ATCC BAA-1458 / RM4099 / 269.97).